Here is a 217-residue protein sequence, read N- to C-terminus: Large ribosomal subunit protein uL4 (217 aa).

A disordered region spans residues 46 to 102 (KRQGTHSAKTRAEVSGGGRKPFRQKGTGRARQGSIRAPHFTGGGISHGPKPRDYSQR).

It belongs to the universal ribosomal protein uL4 family. As to quaternary structure, part of the 50S ribosomal subunit.

Its function is as follows. One of the primary rRNA binding proteins, this protein initially binds near the 5'-end of the 23S rRNA. It is important during the early stages of 50S assembly. It makes multiple contacts with different domains of the 23S rRNA in the assembled 50S subunit and ribosome. In terms of biological role, forms part of the polypeptide exit tunnel. This chain is Large ribosomal subunit protein uL4, found in Corynebacterium diphtheriae (strain ATCC 700971 / NCTC 13129 / Biotype gravis).